A 588-amino-acid chain; its full sequence is MNNSINHKFHHISRAEYQELLAVSRGDAVADYIIDNVSILDLINGGEISGPIVIKGRYIAGVGAEYTDAPALQRIDARGATAVPGFIDAHLHIESSMMTPVTFETATLPRGLTTVICDPHEIVNVMGEAGFAWFARCAEQARQNQYLQVSSCVPALEGCDVNGASFTLEQMLAWRDHPQVTGLAEMMDYPGVISGQNALLDKLDAFRHLTLDGHCPGLGGKELNAYITAGIENCHESYQLEEGRRKLQLGMSLMIREGSAARNLNALAPLINEFNSPQCMLCTDDRNPWEIAHEGHIDALIRRLIEQHNVPLHVAYRVASWSTARHFGLNHLGLLAPGKQADIVLLSDARKVTVQQVLVKGEPIDAQTLQAEESARLAQSAPPYGNTIARQPVSASDFALQFTPGKRYRVIDVIHNELITHSHSSVYSENGFDRDDVSFIAVLERYGQRLAPACGLLGGFGLNEGALAATVSHDSHNIVVIGRSAEEMALAVNQVIQDGGGLCVVRNGQVQSHLPLPIAGLMSTDTAQSLAEQIDALKAAARECGPLPDEPFIQMAFLSLPVIPALKLTSQGLFDGEKFAFTTLEVTE.

Belongs to the metallo-dependent hydrolases superfamily. Adenine deaminase family. As to quaternary structure, homodimer. Requires Mn(2+) as cofactor.

It catalyses the reaction adenine + H2O + H(+) = hypoxanthine + NH4(+). The polypeptide is Adenine deaminase (Escherichia coli (strain K12 / DH10B)).